We begin with the raw amino-acid sequence, 142 residues long: Hemoglobin subunit alpha (142 aa).

The Globin domain maps to 2–142; it reads VLSDANKQEI…LVHQLSSKYR (141 aa). Residue His-60 coordinates O2. His-89 provides a ligand contact to heme b.

The protein belongs to the globin family. As to quaternary structure, heterotetramer of two alpha chains and two beta chains. Red blood cells.

In terms of biological role, involved in oxygen transport from gills to the various peripheral tissues. This is Hemoglobin subunit alpha (HBA) from Bathyraja eatonii (Eaton's skate).